A 205-amino-acid polypeptide reads, in one-letter code: Dephospho-CoA kinase (205 aa).

A DPCK domain is found at 7–205; it reads IIGVTGRIAS…QGIINYERFE (199 aa). Residue 15-20 coordinates ATP; the sequence is ASGKDT.

Belongs to the CoaE family.

The protein resides in the cytoplasm. It carries out the reaction 3'-dephospho-CoA + ATP = ADP + CoA + H(+). It participates in cofactor biosynthesis; coenzyme A biosynthesis; CoA from (R)-pantothenate: step 5/5. Functionally, catalyzes the phosphorylation of the 3'-hydroxyl group of dephosphocoenzyme A to form coenzyme A. This Borreliella burgdorferi (strain ATCC 35210 / DSM 4680 / CIP 102532 / B31) (Borrelia burgdorferi) protein is Dephospho-CoA kinase.